A 314-amino-acid polypeptide reads, in one-letter code: MAFAASQQLNRYYNLYKNIDVTFSKEVVSTLNFEPKQVFVRCSGGQWPCIINSASMTKAKIICGKKSGFLARLRSGITSVNIRFAFFDTEGKDSLSFFVAAKLVGISSYEAGNQDLVLITFEYTQRAPDDLIEKLGILLEANINSQKRRNERVVITPEISRKIGLVEKGTVVYIDAVPRRCLIRDLSFSGAKILLVGIANFLINKEVILRFAFDDPQSVFGIKGKTVRTEPVEGRKDLVALAVQYYPKNIPMMYKMYLNKYFSVVRKPASDGFGDDFLEDVAPASSFTPVSSPIGTNTAPLTPPPADSAPEQIS.

One can recognise a PilZ domain in the interval glutamine 146 to glycine 234. Positions threonine 288–proline 300 are enriched in polar residues. Residues threonine 288 to serine 314 form a disordered region.

Functionally, cyclic-di-GMP binding protein that plays important roles in motility, chemotaxis, biofilm formation and virulence. The sequence is that of Cyclic di-GMP binding protein TDE_0214 from Treponema denticola (strain ATCC 35405 / DSM 14222 / CIP 103919 / JCM 8153 / KCTC 15104).